The following is a 353-amino-acid chain: Photosystem II D2 protein (353 aa).

An N-acetylthreonine modification is found at T2. T2 carries the phosphothreonine modification. The helical transmembrane segment at 41–61 (CAYFAVGGWFTGTTFVTSWYT) threads the bilayer. H118 is a binding site for chlorophyll a. The chain crosses the membrane as a helical span at residues 125-141 (GFMLRQFELARSVQLRP). Pheophytin a-binding residues include Q130 and N143. Residues 153 to 166 (VFVSVFLIYPLGQS) form a helical membrane-spanning segment. Chlorophyll a is bound at residue H198. The chain crosses the membrane as a helical span at residues 208-228 (AALLCAIHGATVENTLFEDGD). A plastoquinone-binding residues include H215 and F262. Fe cation is bound at residue H215. Position 269 (H269) interacts with Fe cation. The chain crosses the membrane as a helical span at residues 279–295 (GLWMSALGVVGLALNLR).

The protein belongs to the reaction center PufL/M/PsbA/D family. In terms of assembly, PSII is composed of 1 copy each of membrane proteins PsbA, PsbB, PsbC, PsbD, PsbE, PsbF, PsbH, PsbI, PsbJ, PsbK, PsbL, PsbM, PsbT, PsbX, PsbY, PsbZ, Psb30/Ycf12, at least 3 peripheral proteins of the oxygen-evolving complex and a large number of cofactors. It forms dimeric complexes. The cofactor is The D1/D2 heterodimer binds P680, chlorophylls that are the primary electron donor of PSII, and subsequent electron acceptors. It shares a non-heme iron and each subunit binds pheophytin, quinone, additional chlorophylls, carotenoids and lipids. There is also a Cl(-1) ion associated with D1 and D2, which is required for oxygen evolution. The PSII complex binds additional chlorophylls, carotenoids and specific lipids..

It localises to the plastid. Its subcellular location is the chloroplast thylakoid membrane. The catalysed reaction is 2 a plastoquinone + 4 hnu + 2 H2O = 2 a plastoquinol + O2. In terms of biological role, photosystem II (PSII) is a light-driven water:plastoquinone oxidoreductase that uses light energy to abstract electrons from H(2)O, generating O(2) and a proton gradient subsequently used for ATP formation. It consists of a core antenna complex that captures photons, and an electron transfer chain that converts photonic excitation into a charge separation. The D1/D2 (PsbA/PsbD) reaction center heterodimer binds P680, the primary electron donor of PSII as well as several subsequent electron acceptors. D2 is needed for assembly of a stable PSII complex. The protein is Photosystem II D2 protein of Guizotia abyssinica (Niger).